A 274-amino-acid chain; its full sequence is 2,3,4,5-tetrahydropyridine-2,6-dicarboxylate N-succinyltransferase (274 aa).

Substrate contacts are provided by Arg-104 and Asp-141.

The protein belongs to the transferase hexapeptide repeat family. In terms of assembly, homotrimer.

The protein localises to the cytoplasm. It catalyses the reaction (S)-2,3,4,5-tetrahydrodipicolinate + succinyl-CoA + H2O = (S)-2-succinylamino-6-oxoheptanedioate + CoA. It functions in the pathway amino-acid biosynthesis; L-lysine biosynthesis via DAP pathway; LL-2,6-diaminopimelate from (S)-tetrahydrodipicolinate (succinylase route): step 1/3. This is 2,3,4,5-tetrahydropyridine-2,6-dicarboxylate N-succinyltransferase from Edwardsiella ictaluri (strain 93-146).